We begin with the raw amino-acid sequence, 307 residues long: Aspartate carbamoyltransferase catalytic subunit (307 aa).

2 residues coordinate carbamoyl phosphate: Arg59 and Thr60. L-aspartate is bound at residue Lys87. Carbamoyl phosphate contacts are provided by Arg109, His137, and Gln140. Arg170 and Arg224 together coordinate L-aspartate. 2 residues coordinate carbamoyl phosphate: Gly265 and Pro266.

Belongs to the aspartate/ornithine carbamoyltransferase superfamily. ATCase family. Heterododecamer (2C3:3R2) of six catalytic PyrB chains organized as two trimers (C3), and six regulatory PyrI chains organized as three dimers (R2).

The enzyme catalyses carbamoyl phosphate + L-aspartate = N-carbamoyl-L-aspartate + phosphate + H(+). It participates in pyrimidine metabolism; UMP biosynthesis via de novo pathway; (S)-dihydroorotate from bicarbonate: step 2/3. Functionally, catalyzes the condensation of carbamoyl phosphate and aspartate to form carbamoyl aspartate and inorganic phosphate, the committed step in the de novo pyrimidine nucleotide biosynthesis pathway. The chain is Aspartate carbamoyltransferase catalytic subunit from Cytophaga hutchinsonii (strain ATCC 33406 / DSM 1761 / CIP 103989 / NBRC 15051 / NCIMB 9469 / D465).